Here is a 490-residue protein sequence, read N- to C-terminus: Betaine aldehyde dehydrogenase (490 aa).

Residue Asp93 coordinates K(+). 150–152 (GAW) is a binding site for NAD(+). Lys162 functions as the Charge relay system in the catalytic mechanism. NAD(+) is bound at residue 176–179 (KPSE). Val180 contacts K(+). 230–233 (GIAS) contributes to the NAD(+) binding site. Leu246 provides a ligand contact to K(+). Glu252 (proton acceptor) is an active-site residue. NAD(+) is bound by residues Gly254, Cys286, and Glu387. Catalysis depends on Cys286, which acts as the Nucleophile. Position 286 is a cysteine sulfenic acid (-SOH) (Cys286). Lys457 and Gly460 together coordinate K(+). Glu464 serves as the catalytic Charge relay system.

Belongs to the aldehyde dehydrogenase family. In terms of assembly, dimer of dimers. Requires K(+) as cofactor.

The catalysed reaction is betaine aldehyde + NAD(+) + H2O = glycine betaine + NADH + 2 H(+). The protein operates within amine and polyamine biosynthesis; betaine biosynthesis via choline pathway; betaine from betaine aldehyde: step 1/1. In terms of biological role, involved in the biosynthesis of the osmoprotectant glycine betaine. Catalyzes the irreversible oxidation of betaine aldehyde to the corresponding acid. This Yersinia pseudotuberculosis serotype IB (strain PB1/+) protein is Betaine aldehyde dehydrogenase.